A 567-amino-acid chain; its full sequence is Dihydroxy-acid dehydratase (567 aa).

Residue cysteine 57 participates in [2Fe-2S] cluster binding. Residue aspartate 89 coordinates Mg(2+). Cysteine 130 provides a ligand contact to [2Fe-2S] cluster. Aspartate 131 and lysine 132 together coordinate Mg(2+). Lysine 132 is modified (N6-carboxylysine). Cysteine 202 serves as a coordination point for [2Fe-2S] cluster. Glutamate 453 contacts Mg(2+). Serine 479 acts as the Proton acceptor in catalysis.

Belongs to the IlvD/Edd family. Homodimer. The cofactor is [2Fe-2S] cluster. Mg(2+) is required as a cofactor.

The catalysed reaction is (2R)-2,3-dihydroxy-3-methylbutanoate = 3-methyl-2-oxobutanoate + H2O. The enzyme catalyses (2R,3R)-2,3-dihydroxy-3-methylpentanoate = (S)-3-methyl-2-oxopentanoate + H2O. The protein operates within amino-acid biosynthesis; L-isoleucine biosynthesis; L-isoleucine from 2-oxobutanoate: step 3/4. It participates in amino-acid biosynthesis; L-valine biosynthesis; L-valine from pyruvate: step 3/4. Functionally, functions in the biosynthesis of branched-chain amino acids. Catalyzes the dehydration of (2R,3R)-2,3-dihydroxy-3-methylpentanoate (2,3-dihydroxy-3-methylvalerate) into 2-oxo-3-methylpentanoate (2-oxo-3-methylvalerate) and of (2R)-2,3-dihydroxy-3-methylbutanoate (2,3-dihydroxyisovalerate) into 2-oxo-3-methylbutanoate (2-oxoisovalerate), the penultimate precursor to L-isoleucine and L-valine, respectively. This Nocardioides sp. (strain ATCC BAA-499 / JS614) protein is Dihydroxy-acid dehydratase.